The primary structure comprises 121 residues: Large ribosomal subunit protein bL12 (121 aa).

Belongs to the bacterial ribosomal protein bL12 family. Homodimer. Part of the ribosomal stalk of the 50S ribosomal subunit. Forms a multimeric L10(L12)X complex, where L10 forms an elongated spine to which 2 to 4 L12 dimers bind in a sequential fashion. Binds GTP-bound translation factors.

In terms of biological role, forms part of the ribosomal stalk which helps the ribosome interact with GTP-bound translation factors. Is thus essential for accurate translation. This is Large ribosomal subunit protein bL12 from Serratia proteamaculans (strain 568).